The sequence spans 73 residues: MVVVDARGSYCPGPLMEMIKTLKQVEVGEVVEVLSSDESSAKDIPEWVKKAGHELVEVKKEEDYWRIVVKKLK.

Cysteine 11 acts as the Cysteine persulfide intermediate in catalysis.

This sequence belongs to the sulfur carrier protein TusA family.

This is Putative sulfur carrier protein AF_0556 from Archaeoglobus fulgidus (strain ATCC 49558 / DSM 4304 / JCM 9628 / NBRC 100126 / VC-16).